The sequence spans 262 residues: Acyl-[acyl-carrier-protein]--UDP-N-acetylglucosamine O-acyltransferase (262 aa).

Belongs to the transferase hexapeptide repeat family. LpxA subfamily. Homotrimer.

It localises to the cytoplasm. It carries out the reaction a (3R)-hydroxyacyl-[ACP] + UDP-N-acetyl-alpha-D-glucosamine = a UDP-3-O-[(3R)-3-hydroxyacyl]-N-acetyl-alpha-D-glucosamine + holo-[ACP]. The protein operates within glycolipid biosynthesis; lipid IV(A) biosynthesis; lipid IV(A) from (3R)-3-hydroxytetradecanoyl-[acyl-carrier-protein] and UDP-N-acetyl-alpha-D-glucosamine: step 1/6. Its function is as follows. Involved in the biosynthesis of lipid A, a phosphorylated glycolipid that anchors the lipopolysaccharide to the outer membrane of the cell. This Erwinia tasmaniensis (strain DSM 17950 / CFBP 7177 / CIP 109463 / NCPPB 4357 / Et1/99) protein is Acyl-[acyl-carrier-protein]--UDP-N-acetylglucosamine O-acyltransferase.